Consider the following 399-residue polypeptide: Glycosyltransferase BC10 (399 aa).

Residues 1-17 are Cytoplasmic-facing; the sequence is MKPPRRWMYGRGGGKGK. Residues 18–38 traverse the membrane as a helical; Signal-anchor for type II membrane protein segment; sequence PAGLLLLGVFLCLSVVLLLLL. Topologically, residues 39–399 are lumenal; it reads HGSSPSLEGE…LIAANGASTM (361 aa). 2 N-linked (GlcNAc...) asparagine glycosylation sites follow: asparagine 142 and asparagine 188.

The protein belongs to the glycosyltransferase 14 family. Expressed in roots, culms, leaves and panicles. Expressed in vascular bundles of leaf sheaths and stems where sclerenchyma cells are developing. Expressed in mechanical tissues of young organs, such as young leaf sheaths, stems and tiller buds.

Its subcellular location is the membrane. Glycosyltransferase required for the regulation of cellulose biosynthesis in the cell wall. Required for the biosynthesis of hexoses (glucose, mannose and galactose) in both cellulosic and non-cellulosic (pectins and hemicelluloses) components of cell walls. Required for the formation of arabinogalactan proteins which contribute to the strengthening of cell walls. Possesses low glycosyltransferase activity. This is Glycosyltransferase BC10 from Oryza sativa subsp. japonica (Rice).